A 506-amino-acid polypeptide reads, in one-letter code: 26S proteasome non-ATPase regulatory subunit 5 (506 aa).

The protein belongs to the proteasome subunit S5B/HSM3 family. In terms of assembly, interacts with PI31; this interaction is increased by PI31 ADP-ribosylation. Interacts with Rpt2.

In terms of biological role, acts as a chaperone during the assembly of the 26S proteasome. This chain is 26S proteasome non-ATPase regulatory subunit 5, found in Drosophila melanogaster (Fruit fly).